Consider the following 419-residue polypeptide: CCA-adding enzyme (419 aa).

G8 and R11 together coordinate ATP. CTP contacts are provided by G8 and R11. Positions 21 and 23 each coordinate Mg(2+). Residues R91, R137, and R140 each coordinate ATP. CTP is bound by residues R91, R137, and R140.

The protein belongs to the tRNA nucleotidyltransferase/poly(A) polymerase family. Bacterial CCA-adding enzyme type 2 subfamily. Requires Mg(2+) as cofactor.

The catalysed reaction is a tRNA precursor + 2 CTP + ATP = a tRNA with a 3' CCA end + 3 diphosphate. It catalyses the reaction a tRNA with a 3' CCA end + 2 CTP + ATP = a tRNA with a 3' CCACCA end + 3 diphosphate. Functionally, catalyzes the addition and repair of the essential 3'-terminal CCA sequence in tRNAs without using a nucleic acid template. Adds these three nucleotides in the order of C, C, and A to the tRNA nucleotide-73, using CTP and ATP as substrates and producing inorganic pyrophosphate. tRNA 3'-terminal CCA addition is required both for tRNA processing and repair. Also involved in tRNA surveillance by mediating tandem CCA addition to generate a CCACCA at the 3' terminus of unstable tRNAs. While stable tRNAs receive only 3'-terminal CCA, unstable tRNAs are marked with CCACCA and rapidly degraded. The chain is CCA-adding enzyme from Buchnera aphidicola subsp. Baizongia pistaciae (strain Bp).